Consider the following 78-residue polypeptide: UPF0369 protein RP167 (78 aa).

Belongs to the SDHAF4 family.

This Rickettsia prowazekii (strain Madrid E) protein is UPF0369 protein RP167.